The following is a 221-amino-acid chain: Placenta growth factor (221 aa).

The signal sequence occupies residues 1 to 18 (MPVMRLFPCFLQLLAGLA). Residue Asn-33 is glycosylated (N-linked (GlcNAc...) asparagine). Disulfide bonds link Cys-52–Cys-94, Cys-83–Cys-128, and Cys-87–Cys-130. A glycan (N-linked (GlcNAc...) asparagine) is linked at Asn-101. Positions 175-221 (QSAVWPSSPVPEEIPRMHPGRNGKKQQRKPLREKMKPERCGDAVPRR) are disordered. Residues 192 to 203 (HPGRNGKKQQRK) are compositionally biased toward basic residues. The segment at 193-213 (PGRNGKKQQRKPLREKMKPER) is heparin-binding. Positions 204–221 (PLREKMKPERCGDAVPRR) are enriched in basic and acidic residues.

Belongs to the PDGF/VEGF growth factor family. Antiparallel homodimer; disulfide-linked. Also found as heterodimer with VEGFA/VEGF. Isoform PlGF-3 is found both as homodimer and as monomer. Post-translationally, N-glycosylated. As to expression, while the three isoforms are present in most placental tissues, PlGF-2 is specific to early (8 week) placenta and only PlGF-1 is found in the colon and mammary carcinomas.

The protein localises to the secreted. In terms of biological role, growth factor active in angiogenesis and endothelial cell growth, stimulating their proliferation and migration. It binds to the receptor FLT1/VEGFR-1. Isoform PlGF-2 binds NRP1/neuropilin-1 and NRP2/neuropilin-2 in a heparin-dependent manner. Also promotes cell tumor growth. In Homo sapiens (Human), this protein is Placenta growth factor (PGF).